The following is a 422-amino-acid chain: Serine--tRNA ligase (422 aa).

231–233 (TSE) contacts L-serine. 262–264 (RQE) provides a ligand contact to ATP. Residue E285 coordinates L-serine. Residue 349–352 (EISS) coordinates ATP. S384 contributes to the L-serine binding site.

The protein belongs to the class-II aminoacyl-tRNA synthetase family. Type-1 seryl-tRNA synthetase subfamily. As to quaternary structure, homodimer. The tRNA molecule binds across the dimer.

The protein resides in the cytoplasm. The enzyme catalyses tRNA(Ser) + L-serine + ATP = L-seryl-tRNA(Ser) + AMP + diphosphate + H(+). It catalyses the reaction tRNA(Sec) + L-serine + ATP = L-seryl-tRNA(Sec) + AMP + diphosphate + H(+). Its pathway is aminoacyl-tRNA biosynthesis; selenocysteinyl-tRNA(Sec) biosynthesis; L-seryl-tRNA(Sec) from L-serine and tRNA(Sec): step 1/1. Its function is as follows. Catalyzes the attachment of serine to tRNA(Ser). Is also able to aminoacylate tRNA(Sec) with serine, to form the misacylated tRNA L-seryl-tRNA(Sec), which will be further converted into selenocysteinyl-tRNA(Sec). This chain is Serine--tRNA ligase, found in Mycoplasma capricolum subsp. capricolum (strain California kid / ATCC 27343 / NCTC 10154).